The primary structure comprises 459 residues: Cysteine--tRNA ligase (459 aa).

C31 serves as a coordination point for Zn(2+). Positions P33–N43 match the 'HIGH' region motif. Zn(2+) contacts are provided by C216, H241, and E245. The 'KMSKS' region signature appears at K274–S278. K277 contributes to the ATP binding site.

This sequence belongs to the class-I aminoacyl-tRNA synthetase family. Monomer. Requires Zn(2+) as cofactor.

The protein resides in the cytoplasm. It catalyses the reaction tRNA(Cys) + L-cysteine + ATP = L-cysteinyl-tRNA(Cys) + AMP + diphosphate. In Rickettsia canadensis (strain McKiel), this protein is Cysteine--tRNA ligase.